Consider the following 1064-residue polypeptide: MNSNGHEEEKKLGNGVVGILAETVNKWERRTPLTPSHCARLLHGGKDRTGISRIVVQPSAKRIHHDALYEDVGCEISDDLSDCGLILGIKQPELEMILPERAYAFFSHTHKAQKENMPLLDKILSERVTLCDYELIVGDHGKRLLAFGKYAGRAGLVDFLHGLGQRKLILGYSTPFLSLGASYMYSSLAAAKAAVISVGEEIASQGLPLGICPLVFVFTGTGNVSLGAQEIFKLLPHTFVEPSKLPELFVKDKGISQNGISTKRVYQVYGCIITSQDMVEHKDPSKSFDKADYYAHPEHYNPVFHEKISPYTSVLVNCMYWEKRFPCLLSTKQLQDLTKKGLPLVGICDITCDIGGSIEFVNRATLIDSPFFRFNPSNNSYYDDMDGDGVLCMAVDILPTEFAKEASQHFGDILSGFVGSLASMTEISDLPAHLKRACISYRGELTSLYEYIPRMRKSNPEEAQDNIIANGVSSQRTFNILVSLSGHLFDKFLINEALDMIEAAGGSFHLAKCELGQSADAESYSELEVGADDKRVLDQIIDSLTRLANPNEDYISPHREANKISLKIGKVQQENEIKEKPEMTKKSGVLILGAGRVCRPAADFLASVRTISSQQWYKTYFGADSEEKTDVHVIVASLYLKDAKETVEGISDVEAVRLDVSDSESLLKYVSQVDVVLSLLPASCHAVVAKTCIELKKHLVTASYVDDETSMLHEKAKSAGITILGEMGLDPGIDHMMAMKMINDAHIKKGKVKSFTSYCGGLPSPAAANNPLAYKFSWNPAGAIRAGQNPAKYKSNGDIIHVDGKNLYDSAARFRVPNLPAFALECFPNRDSLVYGEHYGIESEATTIFRGTLRYEGFSMIMATLSKLGFFDSEANQVLSTGKRITFGALLSNILNKDADNESEPLAGEEEISKRIIKLGHSKETAAKAAKTIVFLGFNEEREVPSLCKSVFDATCYLMEEKLAYSGNEQDMVLLHHEVEVEFLESKRIEKHTATLLEFGDIKNGQTTTAMAKTVGIPAAIGALLLIEDKIKTRGVLRPLEAEVYLPALDILQAYGIKLMEKAE.

Residues 24-445 are lysine-ketoglutarate reductase; the sequence is VNKWERRTPL…RACISYRGEL (422 aa). Thr238 carries the phosphothreonine modification. Ser458 carries the phosphoserine modification. A saccharopine dehydrogenase region spans residues 583-1064; the sequence is MTKKSGVLIL…YGIKLMEKAE (482 aa). Residues 703 to 704, Asp730, Arg830, and 852 to 854 contribute to the L-saccharopine site; these read SY and TLR. Position 729–731 (729–731) interacts with NADP(+); that stretch reads LDP.

The protein in the N-terminal section; belongs to the AlaDH/PNT family. It in the C-terminal section; belongs to the saccharopine dehydrogenase family. In terms of assembly, homodimer. Post-translationally, phosphorylation of Ser-458 seems important for the LKR activity. Ubiquitous, with higher levels in flowers. Isoform Long is mostly present in young leaves, cotyledons, root tips and mature root parts. Whereas isoform Short is mostly expressed in cotyledons and at low levels in all root parts.

Its subcellular location is the cytoplasm. It catalyses the reaction L-saccharopine + NADP(+) + H2O = L-lysine + 2-oxoglutarate + NADPH + H(+). The catalysed reaction is L-saccharopine + NAD(+) + H2O = (S)-2-amino-6-oxohexanoate + L-glutamate + NADH + H(+). The protein operates within amino-acid degradation; L-lysine degradation via saccharopine pathway; glutaryl-CoA from L-lysine: step 1/6. Its pathway is amino-acid degradation; L-lysine degradation via saccharopine pathway; glutaryl-CoA from L-lysine: step 2/6. Its activity is regulated as follows. The LKR activity is stimulated by NaCl. Bifunctional enzyme that catalyzes the first two steps in lysine degradation. The N-terminal and the C-terminal contain lysine-oxoglutarate reductase and saccharopine dehydrogenase activity, respectively. Negatively regulates free Lys accumulation in seeds. The sequence is that of Alpha-aminoadipic semialdehyde synthase (LKR/SDH) from Arabidopsis thaliana (Mouse-ear cress).